We begin with the raw amino-acid sequence, 198 residues long: 7-methyl-GTP pyrophosphatase (198 aa).

The Proton acceptor role is filled by D69.

The protein belongs to the Maf family. YceF subfamily. The cofactor is a divalent metal cation.

It is found in the cytoplasm. The enzyme catalyses N(7)-methyl-GTP + H2O = N(7)-methyl-GMP + diphosphate + H(+). In terms of biological role, nucleoside triphosphate pyrophosphatase that hydrolyzes 7-methyl-GTP (m(7)GTP). May have a dual role in cell division arrest and in preventing the incorporation of modified nucleotides into cellular nucleic acids. The sequence is that of 7-methyl-GTP pyrophosphatase from Yersinia pestis bv. Antiqua (strain Antiqua).